A 581-amino-acid chain; its full sequence is DEAD-box ATP-dependent RNA helicase 22 (581 aa).

The short motif at 80–108 is the Q motif element; the sequence is VSWKSLGLSDNVSIALRDSGFDRPSLTQA. Residues 111 to 380 enclose the Helicase ATP-binding domain; it reads IPSILSGKDV…GGILKHMFQD (270 aa). Position 124 to 131 (124 to 131) interacts with ATP; that stretch reads AETGSGKT. The short motif at 244–247 is the DEAD box element; that stretch reads DEAD. The Helicase C-terminal domain occupies 408 to 566; the sequence is QVDALIEAVK…GFRNKVKKRA (159 aa).

The protein belongs to the DEAD box helicase family.

It catalyses the reaction ATP + H2O = ADP + phosphate + H(+). The sequence is that of DEAD-box ATP-dependent RNA helicase 22 (RH22) from Arabidopsis thaliana (Mouse-ear cress).